Reading from the N-terminus, the 356-residue chain is Phosphate acyltransferase (356 aa).

This sequence belongs to the PlsX family. As to quaternary structure, homodimer. Probably interacts with PlsY.

The protein resides in the cytoplasm. It carries out the reaction a fatty acyl-[ACP] + phosphate = an acyl phosphate + holo-[ACP]. It participates in lipid metabolism; phospholipid metabolism. Catalyzes the reversible formation of acyl-phosphate (acyl-PO(4)) from acyl-[acyl-carrier-protein] (acyl-ACP). This enzyme utilizes acyl-ACP as fatty acyl donor, but not acyl-CoA. The protein is Phosphate acyltransferase of Bartonella bacilliformis (strain ATCC 35685 / KC583 / Herrer 020/F12,63).